The primary structure comprises 712 residues: Sesterterpene synthase btcA (712 aa).

The tract at residues Met-1–Trp-332 is terpene cyclase. Asp-96 contributes to the Mg(2+) binding site. Substrate is bound by residues Asp-96, Asn-234, Ser-238–Glu-242, and Arg-328–His-329. Residues Asp-96 to Asp-100 carry the DDXXD 1 motif. Residues Asn-234 to Glu-242 carry the NSE/DTE motif. The tract at residues Arg-333–Ser-706 is prenyltransferase. The disordered stretch occupies residues Asp-334–Ala-373. Composition is skewed to low complexity over residues Ser-340 to Glu-349 and Ser-361 to Ala-373. Lys-414, Arg-417, and His-446 together coordinate isopentenyl diphosphate. Mg(2+)-binding residues include Asp-453 and Asp-457. A DDXXD 2 motif is present at residues Asp-453–Asp-457. Residue Arg-462 coordinates dimethylallyl diphosphate. Arg-463 lines the isopentenyl diphosphate pocket. Dimethylallyl diphosphate contacts are provided by Lys-540, Thr-541, Gln-580, Asn-587, Lys-597, and Lys-607.

This sequence in the N-terminal section; belongs to the terpene synthase family. It in the C-terminal section; belongs to the FPP/GGPP synthase family. Hexamer. Requires Mg(2+) as cofactor.

The catalysed reaction is isopentenyl diphosphate + (2E,6E)-farnesyl diphosphate = (2E,6E,10E)-geranylgeranyl diphosphate + diphosphate. It carries out the reaction isopentenyl diphosphate + (2E,6E,10E)-geranylgeranyl diphosphate = (2E,6E,10E,14E)-geranylfarnesyl diphosphate + diphosphate. Its pathway is secondary metabolite biosynthesis; terpenoid biosynthesis. Functionally, bifunctional terpene synthase; part of the gene cluster that mediates the biosynthesis of betaestacins. The bifunctional terpene synthase btcA converts isopentenyl diphosphate (IPP) and dimethylallyl diphosphate (DMAPP) into the sesterterpene betaestacin I. The C-terminal prenyltransferase (PT) domain of btcA catalyzes formation of GFPP, whereas the N-terminal terpene cyclase (TC) domain catalyzes the cyclization of GFPP into betaestacin I. The cytochrome P450 monooxygenase btcB oxidizes the C25 methyl group of betaestacin I to yield the carboxylic acid betaestacin IV via the alcohol betaestacin III. The cytochrome P450 monooxygenase btcC further catalyzes the multistep oxidation of betaestacin IV to produce several compounds, including betaestacins Va, Vb, Vc and VI. This Colletotrichum orbiculare (strain 104-T / ATCC 96160 / CBS 514.97 / LARS 414 / MAFF 240422) (Cucumber anthracnose fungus) protein is Sesterterpene synthase btcA.